Here is a 219-residue protein sequence, read N- to C-terminus: Cyclin-U4-3 (219 aa).

The protein belongs to the cyclin family. Cyclin U/P subfamily. In terms of assembly, interacts with CDKA-1. As to expression, expressed at low levels in roots, stems and flowers. Expressed in the shoot apex, leaf primordia and young leaves.

The chain is Cyclin-U4-3 (CYCU4-3) from Arabidopsis thaliana (Mouse-ear cress).